The chain runs to 107 residues: U1-lycotoxin-Ls1b (107 aa).

The first 20 residues, 1-20, serve as a signal peptide directing secretion; that stretch reads MMKVLVVVALLVTLISYSSS. A propeptide spanning residues 21–41 is cleaved from the precursor; that stretch reads EGIDDLEADELLSLMANEQTR. 4 disulfide bridges follow: cysteine 44–cysteine 59, cysteine 51–cysteine 68, cysteine 58–cysteine 86, and cysteine 70–cysteine 84.

This sequence belongs to the neurotoxin 19 (CSTX) family. 04 (U1-Lctx) subfamily. In terms of tissue distribution, expressed by the venom gland.

Its subcellular location is the secreted. This Lycosa singoriensis (Wolf spider) protein is U1-lycotoxin-Ls1b.